The sequence spans 378 residues: Putative glutamate--cysteine ligase 2 (378 aa).

The protein belongs to the glutamate--cysteine ligase type 2 family. YbdK subfamily.

It carries out the reaction L-cysteine + L-glutamate + ATP = gamma-L-glutamyl-L-cysteine + ADP + phosphate + H(+). Its function is as follows. ATP-dependent carboxylate-amine ligase which exhibits weak glutamate--cysteine ligase activity. The polypeptide is Putative glutamate--cysteine ligase 2 (Leifsonia xyli subsp. xyli (strain CTCB07)).